The following is a 244-amino-acid chain: ATP synthase subunit 4, mitochondrial (244 aa).

The transit peptide at 1–35 directs the protein to the mitochondrion; the sequence is MSMSMGVRGLALRSVSKTLFSQGVRCPSMVIGARY. Phosphoserine is present on Ser144.

This sequence belongs to the eukaryotic ATPase B chain family. F-type ATPases have 2 components, CF(1) - the catalytic core - and CF(0) - the membrane proton channel. In yeast, the dimeric form of ATP synthase consists of 17 polypeptides: alpha, beta, gamma, delta, epsilon, 4 (B), 5 (OSCP), 6 (A), 8, 9 (C), d, E (Tim11), f, g, h, i/j and k.

The protein resides in the mitochondrion. Its subcellular location is the mitochondrion inner membrane. Functionally, mitochondrial membrane ATP synthase (F(1)F(0) ATP synthase or Complex V) produces ATP from ADP in the presence of a proton gradient across the membrane which is generated by electron transport complexes of the respiratory chain. F-type ATPases consist of two structural domains, F(1) - containing the extramembraneous catalytic core, and F(0) - containing the membrane proton channel, linked together by a central stalk and a peripheral stalk. During catalysis, ATP synthesis in the catalytic domain of F(1) is coupled via a rotary mechanism of the central stalk subunits to proton translocation. Part of the complex F(0) domain and the peripheric stalk, which acts as a stator to hold the catalytic alpha(3)beta(3) subcomplex and subunit a/ATP6 static relative to the rotary elements. The protein is ATP synthase subunit 4, mitochondrial (ATP4) of Saccharomyces cerevisiae (strain ATCC 204508 / S288c) (Baker's yeast).